Here is a 780-residue protein sequence, read N- to C-terminus: Calpain clp-1 (780 aa).

Residues 269–282 (DVDPFVRPGPDPDR) show a composition bias toward basic and acidic residues. Residues 269–300 (DVDPFVRPGPDPDRGGGGSGPSPISPRPTTEP) are disordered. The region spanning 316-611 (LFEDPQFLAN…FEKMEICNLG (296 aa)) is the Calpain catalytic domain. Residues Cys-371, His-527, and Asn-551 contribute to the active site.

This sequence belongs to the peptidase C2 family. Expressed in muscle and neuronal tissues. Expressed in the ventral and dorsal nerve cord, intestinal and hypodermal tissues.

The protein resides in the cytoplasm. The protein localises to the myofibril. It is found in the sarcomere. It localises to the m line. In terms of biological role, calcium-regulated non-lysosomal thiol-protease which catalyzes limited proteolysis of substrates. Required for assembly and maintenance of integrin attachment complexes which are essential for maintenance of adult muscle. Proteolytic activity is activated in response to increased intracellular Ca(2+) levels during cell degeneration and promotes necrotic cell death. This chain is Calpain clp-1, found in Caenorhabditis elegans.